The chain runs to 745 residues: 1,4-alpha-glucan branching enzyme GlgB (745 aa).

Asp416 functions as the Nucleophile in the catalytic mechanism. Residue Glu469 is the Proton donor of the active site.

This sequence belongs to the glycosyl hydrolase 13 family. GlgB subfamily. In terms of assembly, monomer.

The catalysed reaction is Transfers a segment of a (1-&gt;4)-alpha-D-glucan chain to a primary hydroxy group in a similar glucan chain.. It participates in glycan biosynthesis; glycogen biosynthesis. In terms of biological role, catalyzes the formation of the alpha-1,6-glucosidic linkages in glycogen by scission of a 1,4-alpha-linked oligosaccharide from growing alpha-1,4-glucan chains and the subsequent attachment of the oligosaccharide to the alpha-1,6 position. In Shewanella sp. (strain MR-4), this protein is 1,4-alpha-glucan branching enzyme GlgB.